The chain runs to 706 residues: Drebrin (706 aa).

Position 2 is an N-acetylalanine (alanine 2). In terms of domain architecture, ADF-H spans 3-134 (GVSFSGHRLE…DAGAIGQRLS (132 aa)). Phosphoserine is present on residues serine 141 and serine 142. Residues 209–236 (ERMEQERQEQEERERRYREREQQIEEHR) are compositionally biased toward basic and acidic residues. The interval 209-497 (ERMEQERQEQ…AEPAASVTSV (289 aa)) is disordered. Serine 241 is modified (phosphoserine). The span at 288–298 (DNPREFFRQQE) shows a compositional bias: basic and acidic residues. Residues 331 to 345 (SDSGPSSSSSSSSSP) are compositionally biased toward low complexity. Residue serine 344 is modified to Phosphoserine. The segment covering 357–366 (RTPNLSSSLP) has biased composition (polar residues). Phosphothreonine occurs at positions 379 and 383. Positions 382-396 (PTRSPSDSSTASTPI) are enriched in polar residues. 3 positions are modified to phosphoserine: serine 385, serine 387, and serine 393. Threonine 394 carries the post-translational modification Phosphothreonine. The span at 411–422 (QPPPPPPPPPPT) shows a compositional bias: pro residues. Low complexity predominate over residues 453–497 (AAEPPQAQEPPLLQSSPLEDSMCTESPEQAALAAPAEPAASVTSV). Position 468 is a phosphoserine (serine 468). Position 550 is a phosphothreonine (threonine 550). The segment at 633 to 677 (EPHLLTNGETTQKEGTQASEGYFSQSQEEEFAQSEEPCAKVPPPV) is disordered. Positions 639 to 651 (NGETTQKEGTQAS) are enriched in polar residues. Phosphoserine is present on serine 658.

As to quaternary structure, interacts with RUFY3. Interacts with CXCR4; this interaction is enhanced by antigenic stimulation. Interacts (via ADF-H domain) with ZMYND8 (via N-terminus); the interaction leads to sequestering of ZMYND8 in the cytoplasm. In terms of tissue distribution, expressed in the hippocampus, with expression in the pyramidal cells of CA1, CA2 and CA3 and in the granule cells of the dentate gyrus (at protein level). Highly expressed in brain, also present in stomach and to a lesser degree in kidney, colon, and urinary bladder. The E2 isoform is specifically expressed in adult stomach, kidney, and cultured cells.

Its subcellular location is the cytoplasm. It localises to the cell projection. The protein resides in the dendrite. The protein localises to the cell cortex. It is found in the cell junction. Its subcellular location is the growth cone. In terms of biological role, actin cytoskeleton-organizing protein that plays a role in the formation of cell projections. Required for actin polymerization at immunological synapses (IS) and for the recruitment of the chemokine receptor CXCR4 to IS. Plays a role in dendritic spine morphogenesis and organization, including the localization of the dopamine receptor DRD1 to the dendritic spines. Involved in memory-related synaptic plasticity in the hippocampus. In Mus musculus (Mouse), this protein is Drebrin (Dbn1).